Consider the following 223-residue polypeptide: Putative thymidylate synthase (223 aa).

Cys146 is an active-site residue.

It belongs to the thymidylate synthase family. Archaeal-type ThyA subfamily. In terms of assembly, monomer.

Its subcellular location is the cytoplasm. It participates in pyrimidine metabolism; dTTP biosynthesis. May catalyze the biosynthesis of dTMP using an unknown cosubstrate. In vitro, also catalyzes the dehalogenation of 5-bromo-deoxyuridine monophosphate (Br-dUMP) and the tritium exchange of [5-3H]deoxyuridine monophosphate ([5-3H]dUMP). This is Putative thymidylate synthase (thyA) from Methanothermobacter marburgensis (strain ATCC BAA-927 / DSM 2133 / JCM 14651 / NBRC 100331 / OCM 82 / Marburg) (Methanobacterium thermoautotrophicum).